Here is a 160-residue protein sequence, read N- to C-terminus: uncharacterized protein (160 aa).

4 consecutive transmembrane segments (helical) span residues 7–27 (IFLKIALVLIGIPILALCIFL), 48–68 (LVFIYLYVTAIPFYFALYQAF), 95–115 (AVTISIFYAAGMPVFYLMAEI), and 121–141 (IIVIGLVIIFASMVIAVFAAV).

The protein resides in the cell membrane. This is an uncharacterized protein from Bacillus subtilis (strain 168).